Here is a 171-residue protein sequence, read N- to C-terminus: uncharacterized protein (171 aa).

An N-terminal signal peptide occupies residues 1-17; sequence MLKRIIWILFLLGLTWG.

Its function is as follows. Part of the elfADCG-ycbUVF fimbrial operon, which promotes adhesion of bacteria to different abiotic surfaces. This is an uncharacterized protein from Escherichia coli (strain K12).